A 491-amino-acid polypeptide reads, in one-letter code: Glucose-6-phosphate 1-dehydrogenase (491 aa).

Residues Arg49, 91–92 (DV), and Lys146 each bind NADP(+). Positions 176, 180, 214, and 233 each coordinate substrate. Residue His238 is the Proton acceptor of the active site. Positions 338 and 343 each coordinate substrate.

Belongs to the glucose-6-phosphate dehydrogenase family.

It catalyses the reaction D-glucose 6-phosphate + NADP(+) = 6-phospho-D-glucono-1,5-lactone + NADPH + H(+). It functions in the pathway carbohydrate degradation; pentose phosphate pathway; D-ribulose 5-phosphate from D-glucose 6-phosphate (oxidative stage): step 1/3. Catalyzes the oxidation of glucose 6-phosphate to 6-phosphogluconolactone. In Buchnera aphidicola subsp. Acyrthosiphon pisum (strain APS) (Acyrthosiphon pisum symbiotic bacterium), this protein is Glucose-6-phosphate 1-dehydrogenase.